Reading from the N-terminus, the 139-residue chain is D-ribose pyranase (139 aa).

The active-site Proton donor is the His-20. Substrate-binding positions include Asp-28, His-106, and Tyr-128–Asn-130.

This sequence belongs to the RbsD / FucU family. RbsD subfamily. In terms of assembly, homodecamer.

It is found in the cytoplasm. It catalyses the reaction beta-D-ribopyranose = beta-D-ribofuranose. Its pathway is carbohydrate metabolism; D-ribose degradation; D-ribose 5-phosphate from beta-D-ribopyranose: step 1/2. Catalyzes the interconversion of beta-pyran and beta-furan forms of D-ribose. This chain is D-ribose pyranase, found in Haemophilus influenzae (strain 86-028NP).